Consider the following 430-residue polypeptide: MIOREX complex component 4 (430 aa).

Residues 1-27 (MTVLYTSASLKKMKCLAFNMGMNCVRT) constitute a mitochondrion transit peptide. The chain crosses the membrane as a helical span at residues 403-420 (FLISLSALLASFFAYYRY).

As to quaternary structure, associates with the mitochondrial ribosome.

Its subcellular location is the mitochondrion. The protein localises to the mitochondrion membrane. Component of MIOREX complexes, large expressome-like assemblies of ribosomes with factors involved in all the steps of post-transcriptional gene expression. The polypeptide is MIOREX complex component 4 (Saccharomyces cerevisiae (strain ATCC 204508 / S288c) (Baker's yeast)).